The chain runs to 596 residues: Probable tripeptidyl-peptidase SED2 (596 aa).

The first 16 residues, Met-1 to Ala-16, serve as a signal peptide directing secretion. The propeptide at Lys-17–Ala-203 is removed in mature form. A Peptidase S53 domain is found at Leu-210–Pro-596. Residue Asn-265 is glycosylated (N-linked (GlcNAc...) asparagine). Active-site charge relay system residues include Glu-286 and Asp-290. N-linked (GlcNAc...) asparagine glycosylation occurs at Asn-403. The Charge relay system role is filled by Ser-501. Asp-543 and Ile-544 together coordinate Ca(2+). The N-linked (GlcNAc...) asparagine glycan is linked to Asn-572. Residues Gly-576 and Asp-578 each contribute to the Ca(2+) site.

Requires Ca(2+) as cofactor.

It is found in the secreted. It localises to the extracellular space. It catalyses the reaction Release of an N-terminal tripeptide from a polypeptide.. Its function is as follows. Secreted tripeptidyl-peptidase which degrades proteins at acidic pHs and is involved in virulence. This Trichophyton verrucosum (strain HKI 0517) protein is Probable tripeptidyl-peptidase SED2 (SED2).